We begin with the raw amino-acid sequence, 451 residues long: Tubulin alpha-1/alpha-2 chain (451 aa).

GTP is bound at residue Gln-11. Lys-40 is subject to N6-acetyllysine. GTP contacts are provided by Glu-71, Gly-144, Thr-145, Thr-179, Asn-206, and Asn-228. Glu-71 contacts Mg(2+). The active site involves Glu-254.

This sequence belongs to the tubulin family. In terms of assembly, dimer of alpha and beta chains. A typical microtubule is a hollow water-filled tube with an outer diameter of 25 nm and an inner diameter of 15 nM. Alpha-beta heterodimers associate head-to-tail to form protofilaments running lengthwise along the microtubule wall with the beta-tubulin subunit facing the microtubule plus end conferring a structural polarity. Microtubules usually have 13 protofilaments but different protofilament numbers can be found in some organisms and specialized cells. Requires Mg(2+) as cofactor. In terms of processing, undergoes a tyrosination/detyrosination cycle, the cyclic removal and re-addition of a C-terminal tyrosine residue by the enzymes tubulin tyrosine carboxypeptidase (TTCP) and tubulin tyrosine ligase (TTL), respectively. Acetylation of alpha chains at Lys-40 stabilizes microtubules and affects affinity and processivity of microtubule motors. This modification has a role in multiple cellular functions, ranging from cell motility, cell cycle progression or cell differentiation to intracellular trafficking and signaling.

It is found in the cytoplasm. The protein resides in the cytoskeleton. It catalyses the reaction GTP + H2O = GDP + phosphate + H(+). Tubulin is the major constituent of microtubules, a cylinder consisting of laterally associated linear protofilaments composed of alpha- and beta-tubulin heterodimers. Microtubules grow by the addition of GTP-tubulin dimers to the microtubule end, where a stabilizing cap forms. Below the cap, tubulin dimers are in GDP-bound state, owing to GTPase activity of alpha-tubulin. This chain is Tubulin alpha-1/alpha-2 chain (TUBA1), found in Volvox carteri (Green alga).